A 144-amino-acid polypeptide reads, in one-letter code: Large ribosomal subunit protein uL15 (144 aa).

The segment at Met1 to Gln54 is disordered. Residues Arg21–Gly31 show a composition bias toward gly residues.

It belongs to the universal ribosomal protein uL15 family. As to quaternary structure, part of the 50S ribosomal subunit.

Functionally, binds to the 23S rRNA. This is Large ribosomal subunit protein uL15 from Enterobacter sp. (strain 638).